We begin with the raw amino-acid sequence, 100 residues long: Small ribosomal subunit protein uS14c (100 aa).

It belongs to the universal ribosomal protein uS14 family. In terms of assembly, part of the 30S ribosomal subunit.

Its subcellular location is the plastid. It is found in the chloroplast. In terms of biological role, binds 16S rRNA, required for the assembly of 30S particles. The chain is Small ribosomal subunit protein uS14c from Nephroselmis olivacea (Green alga).